A 144-amino-acid polypeptide reads, in one-letter code: Large ribosomal subunit protein uL16 (144 aa).

Positions 1–16 (MLQPKKTKFRRQQKGR) are enriched in basic residues. Residues 1-22 (MLQPKKTKFRRQQKGRMKGEAQ) form a disordered region.

Belongs to the universal ribosomal protein uL16 family. Part of the 50S ribosomal subunit.

Functionally, binds 23S rRNA and is also seen to make contacts with the A and possibly P site tRNAs. In Parabacteroides distasonis (strain ATCC 8503 / DSM 20701 / CIP 104284 / JCM 5825 / NCTC 11152), this protein is Large ribosomal subunit protein uL16.